The sequence spans 83 residues: Large ribosomal subunit protein eL31 (83 aa).

Belongs to the eukaryotic ribosomal protein eL31 family.

The chain is Large ribosomal subunit protein eL31 from Methanococcus vannielii (strain ATCC 35089 / DSM 1224 / JCM 13029 / OCM 148 / SB).